Here is a 495-residue protein sequence, read N- to C-terminus: Putative aldehyde dehydrogenase AldA (495 aa).

An NAD(+)-binding site is contributed by 212–218 (GKGSESG). Residues E256 and C290 contribute to the active site.

It belongs to the aldehyde dehydrogenase family.

It catalyses the reaction an aldehyde + NAD(+) + H2O = a carboxylate + NADH + 2 H(+). The protein is Putative aldehyde dehydrogenase AldA (aldA) of Staphylococcus aureus (strain MSSA476).